A 360-amino-acid polypeptide reads, in one-letter code: Membrane-bound lytic murein transglycosylase C (360 aa).

An N-terminal signal peptide occupies residues 1–16 (MKKLLALAVIAPLLIS). The N-palmitoyl cysteine moiety is linked to residue C17. C17 carries the S-diacylglycerol cysteine lipid modification.

This sequence belongs to the transglycosylase Slt family.

It is found in the cell outer membrane. The enzyme catalyses Exolytic cleavage of the (1-&gt;4)-beta-glycosidic linkage between N-acetylmuramic acid (MurNAc) and N-acetylglucosamine (GlcNAc) residues in peptidoglycan, from either the reducing or the non-reducing ends of the peptidoglycan chains, with concomitant formation of a 1,6-anhydrobond in the MurNAc residue.. Its function is as follows. Murein-degrading enzyme. May play a role in recycling of muropeptides during cell elongation and/or cell division. The protein is Membrane-bound lytic murein transglycosylase C of Salmonella typhi.